A 359-amino-acid chain; its full sequence is UDP-3-O-acylglucosamine N-acyltransferase (359 aa).

His-247 functions as the Proton acceptor in the catalytic mechanism.

This sequence belongs to the transferase hexapeptide repeat family. LpxD subfamily. Homotrimer.

The catalysed reaction is a UDP-3-O-[(3R)-3-hydroxyacyl]-alpha-D-glucosamine + a (3R)-hydroxyacyl-[ACP] = a UDP-2-N,3-O-bis[(3R)-3-hydroxyacyl]-alpha-D-glucosamine + holo-[ACP] + H(+). Its pathway is bacterial outer membrane biogenesis; LPS lipid A biosynthesis. Catalyzes the N-acylation of UDP-3-O-acylglucosamine using 3-hydroxyacyl-ACP as the acyl donor. Is involved in the biosynthesis of lipid A, a phosphorylated glycolipid that anchors the lipopolysaccharide to the outer membrane of the cell. The polypeptide is UDP-3-O-acylglucosamine N-acyltransferase (Chlorobium chlorochromatii (strain CaD3)).